The primary structure comprises 324 residues: NADH-ubiquinone oxidoreductase chain 1 (324 aa).

The next 8 membrane-spanning stretches (helical) occupy residues 10 to 30 (MIMTLSYMIPILIAVAFLTLV), 76 to 96 (FLFILTPILALLLALTIWTPL), 107 to 127 (LGLLFLLAMSSLTVYSLLWSG), 143 to 163 (VAQTISYEVTLAIILLSTIML), 178 to 198 (PMYLIFSSWPLTMMWYISTLA), 229 to 249 (LFFLAEYANIMLMNTLTITLF), 260 to 280 (ELFSITLATKVLLLSSSFLWI), and 300 to 320 (FLPLTLAMCLWHTSMPISYAG).

The protein belongs to the complex I subunit 1 family.

Its subcellular location is the mitochondrion inner membrane. It catalyses the reaction a ubiquinone + NADH + 5 H(+)(in) = a ubiquinol + NAD(+) + 4 H(+)(out). Functionally, core subunit of the mitochondrial membrane respiratory chain NADH dehydrogenase (Complex I) that is believed to belong to the minimal assembly required for catalysis. Complex I functions in the transfer of electrons from NADH to the respiratory chain. The immediate electron acceptor for the enzyme is believed to be ubiquinone. The sequence is that of NADH-ubiquinone oxidoreductase chain 1 (MT-ND1) from Coturnix japonica (Japanese quail).